The sequence spans 211 residues: MSFKAAEVSSLSERINWEKVDGLVPAIVQDFQSSQVLMMGYMNQDALAKTGETGQVTFFSRTKERLWTKGETSGNVLQLVNISLDCDNDTLLVRVNPIGPTCHTGTTTCWDGDAQEESQMVWLHQLEQLLAARKSADPDSSYTASLYARGTKRISQKVGEEGVEVALAATSGDKAELVCESADLIYHLLVLLQDQGLSMNDVVNKLKERHK.

Residues 1–122 are phosphoribosyl-AMP cyclohydrolase; that stretch reads MSFKAAEVSS…DAQEESQMVW (122 aa). Residues 123 to 211 form a phosphoribosyl-ATP pyrophosphohydrolase region; sequence LHQLEQLLAA…VVNKLKERHK (89 aa).

This sequence in the N-terminal section; belongs to the PRA-CH family. In the C-terminal section; belongs to the PRA-PH family.

It is found in the cytoplasm. It catalyses the reaction 1-(5-phospho-beta-D-ribosyl)-ATP + H2O = 1-(5-phospho-beta-D-ribosyl)-5'-AMP + diphosphate + H(+). It carries out the reaction 1-(5-phospho-beta-D-ribosyl)-5'-AMP + H2O = 1-(5-phospho-beta-D-ribosyl)-5-[(5-phospho-beta-D-ribosylamino)methylideneamino]imidazole-4-carboxamide. It functions in the pathway amino-acid biosynthesis; L-histidine biosynthesis; L-histidine from 5-phospho-alpha-D-ribose 1-diphosphate: step 2/9. It participates in amino-acid biosynthesis; L-histidine biosynthesis; L-histidine from 5-phospho-alpha-D-ribose 1-diphosphate: step 3/9. The chain is Histidine biosynthesis bifunctional protein HisIE from Vibrio parahaemolyticus serotype O3:K6 (strain RIMD 2210633).